A 171-amino-acid chain; its full sequence is Translationally-controlled tumor protein homolog (171 aa).

Positions 1–171 constitute a TCTP domain; it reads MIIYRDCISQ…FKDGLEMEKC (171 aa).

Belongs to the TCTP family. As to expression, expressed by the venom gland.

It is found in the secreted. Its function is as follows. Venom protein that causes edema, enhances vascular permeability and is likely related to the inflammatory activity of the venom. In Micrurus fulvius (Eastern coral snake), this protein is Translationally-controlled tumor protein homolog.